Here is a 546-residue protein sequence, read N- to C-terminus: Probable protein kinase UbiB (546 aa).

In terms of domain architecture, Protein kinase spans 124–502 (DFDIKPLASA…QARQGQSRYL (379 aa)). ATP is bound by residues 130-138 (LASASIAQV) and Lys153. Asp288 acts as the Proton acceptor in catalysis. The next 2 membrane-spanning stretches (helical) occupy residues 499–519 (SRYLLGIGATLLISGTLLLIS) and 521–541 (VEADMVPAGLMAAGIVTWIIG).

The protein belongs to the ABC1 family. UbiB subfamily.

It localises to the cell inner membrane. It functions in the pathway cofactor biosynthesis; ubiquinone biosynthesis [regulation]. Its function is as follows. Is probably a protein kinase regulator of UbiI activity which is involved in aerobic coenzyme Q (ubiquinone) biosynthesis. The chain is Probable protein kinase UbiB from Pectobacterium carotovorum subsp. carotovorum (strain PC1).